The sequence spans 84 residues: Extender of the chronological lifespan protein 2 (84 aa).

This sequence belongs to the ecl1 family.

Its subcellular location is the nucleus. Involved in chronological cell aging. The polypeptide is Extender of the chronological lifespan protein 2 (ecl2) (Schizosaccharomyces pombe (strain 972 / ATCC 24843) (Fission yeast)).